The primary structure comprises 449 residues: MGKLFGTDGVRGVANKELTCELAFDLGRAGAYVLTETKQKPKILIGKDTRISCDMLEAALCAGLTSVGADVYLAGVITTPAIAHLVKSHGFDAGIMISASHNPYEFNGIKFFNSQGFKLSDQIEEKIEDIILNKKWDEVPHAQFDAIGRINRVELKKDYQEYLKSTLNAASFKGFKIVIDCANGAASAIAPEVFEDLGAEVVVINNQPDGTNINKNCGSTHLQALQEEVVKNKADFGIAYDGDADRTLFVDEEGNTVDGDKIMLLLAQNLKQQGRLKRNTLVVTVMSNMGLFVAAKELGINLEVTKVGDRYVLEKLLEGGYSIGGEQSGHIILLDYATTGDGILTSLQLTKLIRESGKKLSELGKIMKVYPQVLVNAKVENGKKDLYSKDPVILEAIKKVEEKLNGKGRVLIRPSGTEPLIRVMIEGEDYEEIKKDADNLASLIESRLS.

Residue S100 is the Phosphoserine intermediate of the active site. Residues S100, D241, D243, and D245 each coordinate Mg(2+). S100 is modified (phosphoserine).

Belongs to the phosphohexose mutase family. The cofactor is Mg(2+). In terms of processing, activated by phosphorylation.

It carries out the reaction alpha-D-glucosamine 1-phosphate = D-glucosamine 6-phosphate. Functionally, catalyzes the conversion of glucosamine-6-phosphate to glucosamine-1-phosphate. The sequence is that of Phosphoglucosamine mutase from Caldicellulosiruptor saccharolyticus (strain ATCC 43494 / DSM 8903 / Tp8T 6331).